Reading from the N-terminus, the 51-residue chain is Small polypeptide DEVIL 1 (51 aa).

A disordered region spans residues 1 to 25; that stretch reads MEMKRVMMSSAERSKEKKRSISRRL. Basic residues predominate over residues 16–25; that stretch reads EKKRSISRRL. The tract at residues 20-51 is required for DVL/RTFL small polypeptide activity; it reads SISRRLGKYMKEQKGRIYIIRRCMVMLLCSHD. Residues 28-44 form a helical membrane-spanning segment; sequence YMKEQKGRIYIIRRCMV.

This sequence belongs to the DVL/RTFL small polypeptides family. As to expression, mostly expressed in leaves and, to a lower extent, in roots and stems.

The protein localises to the cell membrane. Functionally, small polypeptide acting as a regulatory molecule which coordinates cellular responses required for differentiation, growth and development, including leaves shape, pedicule elongation, inflorescence organization and fruit maturation, probably by restricting polar cell proliferation in lateral organs and coordinating socket cell recruitment and differentiation at trichome sites. The chain is Small polypeptide DEVIL 1 from Arabidopsis thaliana (Mouse-ear cress).